The sequence spans 62 residues: Calmodulin regulator protein PCP4 (62 aa).

The interval M1 to T39 is disordered. The span at G12–E28 shows a compositional bias: basic and acidic residues. Residues E28–E40 are acidic; binds calcium and is required for modulating the calcium-binding kinetics of calmodulin. The 24-residue stretch at T39–S62 folds into the IQ domain.

This sequence belongs to the PCP4 family. Binds to both calcium-free and calcium-bound calmodulin. The affinity for the calcium-bound form is 50-fold greater.

In terms of biological role, functions as a modulator of calcium-binding by calmodulin. Thereby, regulates calmodulin activity and the different processes it controls. For instance, may play a role in neuronal differentiation through activation of calmodulin-dependent kinase signaling pathways. This is Calmodulin regulator protein PCP4 from Mus musculus (Mouse).